The sequence spans 127 residues: Fluoride-specific ion channel FluC (127 aa).

4 consecutive transmembrane segments (helical) span residues 4-24 (SILAIALGAALGALLRWFLGL), 36-56 (GTLLANLVGGYAIGAAIAYFA), 68-88 (LIITGFCGGLTTFSTFSAEVV), and 99-119 (AAGAIATHVGGSLLMTLLGLF). Residues G75 and T78 each coordinate Na(+).

This sequence belongs to the fluoride channel Fluc/FEX (TC 1.A.43) family.

It is found in the cell inner membrane. The catalysed reaction is fluoride(in) = fluoride(out). Its activity is regulated as follows. Na(+) is not transported, but it plays an essential structural role and its presence is essential for fluoride channel function. Functionally, fluoride-specific ion channel. Important for reducing fluoride concentration in the cell, thus reducing its toxicity. The polypeptide is Fluoride-specific ion channel FluC (Pseudomonas paraeruginosa (strain DSM 24068 / PA7) (Pseudomonas aeruginosa (strain PA7))).